Here is a 321-residue protein sequence, read N- to C-terminus: Sideroflexin-3 (321 aa).

Position 1 is an N-acetylmethionine (Met1). Helical transmembrane passes span Leu146 to Leu164, Leu174 to Leu194, Phe226 to Ile246, and Leu266 to Phe286.

The protein belongs to the sideroflexin family.

Its subcellular location is the mitochondrion membrane. It catalyses the reaction L-serine(in) = L-serine(out). Its function is as follows. Mitochondrial serine transporter that mediates transport of serine into mitochondria, an important step of the one-carbon metabolism pathway. Mitochondrial serine is converted to glycine and formate, which then exits to the cytosol where it is used to generate the charged folates that serve as one-carbon donors. In Bos taurus (Bovine), this protein is Sideroflexin-3 (SFXN3).